A 505-amino-acid chain; its full sequence is Deoxyguanosinetriphosphate triphosphohydrolase (505 aa).

In terms of domain architecture, HD spans 66–273 (RLTHSMEVQQ…MEAADDISYC (208 aa)).

Belongs to the dGTPase family. Type 1 subfamily. As to quaternary structure, homotetramer. Requires Mg(2+) as cofactor.

The enzyme catalyses dGTP + H2O = 2'-deoxyguanosine + triphosphate + H(+). In terms of biological role, dGTPase preferentially hydrolyzes dGTP over the other canonical NTPs. This is Deoxyguanosinetriphosphate triphosphohydrolase from Escherichia coli (strain K12 / MC4100 / BW2952).